A 352-amino-acid chain; its full sequence is Selenide, water dikinase (352 aa).

Residue C23 is part of the active site. ATP-binding positions include K26 and 54-56; that span reads SRD. Position 57 (D57) interacts with Mg(2+). Residues D74, D97, and 145-147 each bind ATP; that span reads GHS. Residue D97 participates in Mg(2+) binding. D233 serves as a coordination point for Mg(2+).

The protein belongs to the selenophosphate synthase 1 family. Class I subfamily. Homodimer. It depends on Mg(2+) as a cofactor.

It carries out the reaction hydrogenselenide + ATP + H2O = selenophosphate + AMP + phosphate + 2 H(+). Synthesizes selenophosphate from selenide and ATP. This chain is Selenide, water dikinase, found in Shewanella baltica (strain OS223).